The sequence spans 530 residues: Cation transporter HKT2;2 (530 aa).

Over 1 to 40 (MTSIYQEFIHTKCQSFRSIGRYVLHSIVLIYRFVSLHVHP) the chain is Cytoplasmic. 2 consecutive transmembrane segments (helical) span residues 41–61 (FWIQ…LLMF) and 102–122 (IVVL…FLGL). Residues 123–186 (MLRLKHKHNP…DLKRSKRLRW (64 aa)) lie on the Cytoplasmic side of the membrane. 2 helical membrane passes run 187-207 (FLGF…FLLV) and 260-280 (GLLL…PLFL). The Cytoplasmic portion of the chain corresponds to 281–317 (RILIWFLGKVTKLKDLKLMIKNSDELQYDYLLPKLPT). Helical transmembrane passes span 318–338 (AFLA…FGSV) and 372–392 (IDCS…MYLP). Residues 393 to 420 (PSTTFALSNGDEKTANKKAKRKLGLVVR) lie on the Cytoplasmic side of the membrane. 2 helical membrane-spanning segments follow: residues 421-441 (NLAF…LITE) and 494-514 (SLSG…MLYG). Topologically, residues 515 to 530 (RLKAFTKGTGEYWRLW) are cytoplasmic.

It belongs to the TrkH potassium transport family. HKT (TC 2.A.38.3) subfamily.

The protein localises to the membrane. Seems to be involved in regulation of potassium-sodium homeostasis. Seems to act as a potassium-sodium cotransporter, which mediates increased potassium uptake under external sodium accumulation and contributes to salt-tolerance in cultivar indica Pokkali. This is Cation transporter HKT2;2 from Oryza sativa subsp. indica (Rice).